We begin with the raw amino-acid sequence, 364 residues long: D-alanine--D-alanine ligase A (364 aa).

In terms of domain architecture, ATP-grasp spans 145-348 (KRLLRDAGLN…YTDLISRLIE (204 aa)). ATP is bound at residue 175 to 230 (ESRLGLPLFVKPANQGSSVGVSKVANEAQYQQAVALAFEFDHKVVVEQGIKGREIE). D302, E315, and N317 together coordinate Mg(2+).

The protein belongs to the D-alanine--D-alanine ligase family. It depends on Mg(2+) as a cofactor. Mn(2+) serves as cofactor.

It is found in the cytoplasm. The catalysed reaction is 2 D-alanine + ATP = D-alanyl-D-alanine + ADP + phosphate + H(+). The protein operates within cell wall biogenesis; peptidoglycan biosynthesis. Cell wall formation. This chain is D-alanine--D-alanine ligase A (ddlA), found in Salmonella typhi.